The following is a 395-amino-acid chain: Probable alcohol dehydrogenase EutG (395 aa).

NAD(+)-binding positions include aspartate 57, 116-120, 156-160, lysine 178, and 197-201; these read GSVLD, TTAGT, and VTEGV. Fe cation contacts are provided by aspartate 212, histidine 216, histidine 281, and histidine 295. NAD(+)-binding residues include histidine 295 and aspartate 354.

Belongs to the iron-containing alcohol dehydrogenase family. It depends on Fe cation as a cofactor.

The protein resides in the bacterial microcompartment. The catalysed reaction is ethanol + NAD(+) = acetaldehyde + NADH + H(+). It participates in amine and polyamine degradation; ethanolamine degradation. Its function is as follows. Probably acts on the acetaldehyde produced by the degradation of ethanolamine, producing ethanol. Expression of the eut operon allows this bacteria to use ethanolamine (EA) as a carbon, nitrogen and energy source. It relies on cobalamin (vitamin B12) both as a cofactor for the ethanolamine ammonia-lyase (EAL) activity and to induce the operon. EA enhances bacterial survival in macrophages in a concentration-dependent manner, suggesting it is an important nutrient during infection. The polypeptide is Probable alcohol dehydrogenase EutG (Salmonella typhimurium (strain LT2 / SGSC1412 / ATCC 700720)).